Here is a 274-residue protein sequence, read N- to C-terminus: 3-methyl-2-oxobutanoate hydroxymethyltransferase (274 aa).

D44 and D83 together coordinate Mg(2+). 3-methyl-2-oxobutanoate contacts are provided by residues 44 to 45 (DS), D83, and K113. E115 contacts Mg(2+). E182 serves as the catalytic Proton acceptor.

This sequence belongs to the PanB family. In terms of assembly, homodecamer; pentamer of dimers. It depends on Mg(2+) as a cofactor.

Its subcellular location is the cytoplasm. The enzyme catalyses 3-methyl-2-oxobutanoate + (6R)-5,10-methylene-5,6,7,8-tetrahydrofolate + H2O = 2-dehydropantoate + (6S)-5,6,7,8-tetrahydrofolate. Its pathway is cofactor biosynthesis; (R)-pantothenate biosynthesis; (R)-pantoate from 3-methyl-2-oxobutanoate: step 1/2. Functionally, catalyzes the reversible reaction in which hydroxymethyl group from 5,10-methylenetetrahydrofolate is transferred onto alpha-ketoisovalerate to form ketopantoate. The polypeptide is 3-methyl-2-oxobutanoate hydroxymethyltransferase (Campylobacter jejuni subsp. doylei (strain ATCC BAA-1458 / RM4099 / 269.97)).